A 97-amino-acid polypeptide reads, in one-letter code: MICOS complex subunit MIC12 (97 aa).

The chain crosses the membrane as a helical span at residues 7–24 (LTSITAVSSTLAASYYFY).

This sequence belongs to the MICOS complex subunit Mic12 family. Component of the mitochondrial contact site and cristae organizing system (MICOS) complex.

Its subcellular location is the mitochondrion inner membrane. Functionally, component of the MICOS complex, a large protein complex of the mitochondrial inner membrane that plays crucial roles in the maintenance of crista junctions, inner membrane architecture, and formation of contact sites to the outer membrane. The protein is MICOS complex subunit MIC12 (AIM5) of Zygosaccharomyces rouxii (strain ATCC 2623 / CBS 732 / NBRC 1130 / NCYC 568 / NRRL Y-229).